A 596-amino-acid chain; its full sequence is Neuroepithelial cell-transforming gene 1 protein (596 aa).

An N-acetylmethionine modification is found at Met-1. Positions 1-44 (MEPELAAQKQPRPRRRSRRASGLSTEGATGPSADTSGSELDGRC) are disordered. Residues 1 to 74 (MEPELAAQKQ…LKRKRREKDD (74 aa)) form a necessary for nuclear localization region. The short motif at 12 to 19 (RPRRRSRR) is the Nuclear localization signal element. Residues Ser-21 and Ser-32 each carry the phosphoserine modification. The span at 22–38 (GLSTEGATGPSADTSGS) shows a compositional bias: polar residues. Positions 66-72 (KRKRREK) match the Nuclear localization signal motif. Ser-100, Ser-106, and Ser-122 each carry phosphoserine. The disordered stretch occupies residues 127–146 (GDHRSPASAQKFSSRSTVPT). A compositionally biased stretch (polar residues) spans 133 to 145 (ASAQKFSSRSTVP). The 183-residue stretch at 174–356 (RRQEAIYEMS…QGVLSDINLK (183 aa)) folds into the DH domain. The 116-residue stretch at 386-501 (VLLCHGELRS…WFNCIRAAIA (116 aa)) folds into the PH domain. Ser-508 is subject to Phosphoserine. The segment at 562–596 (MAEDSKSLKTHQTQPGIRRARDKALSGGKRKETLV) is disordered.

In terms of assembly, interacts with RHOA in its GTP- and GDP-bound states, and with CDC42 in its GTP-bound state. Interacts with the PDZ 1 domain of BAIAP1. Widely expressed.

It localises to the cytoplasm. Its subcellular location is the nucleus. Functionally, acts as a guanine nucleotide exchange factor (GEF) for RhoA GTPase. May be involved in activation of the SAPK/JNK pathway Stimulates genotoxic stress-induced RHOB activity in breast cancer cells leading to their cell death. The chain is Neuroepithelial cell-transforming gene 1 protein (NET1) from Homo sapiens (Human).